The primary structure comprises 523 residues: NADH-ubiquinone oxidoreductase chain 2 (523 aa).

A run of 14 helical transmembrane segments spans residues 3–23, 30–50, 62–82, 110–130, 135–155, 170–190, 212–232, 246–266, 281–301, 306–326, 333–353, 386–406, 419–439, and 490–510; these read LFGV…IPAI, IILL…NNIG, VTTI…LVLL, SVLA…SSLI, LISM…LATI, FLLG…LYSF, IEIS…AAPF, VVTT…ILEF, LLLI…LAQY, LLTY…AINN, FLFY…ILVA, GLSL…VGFF, GNFF…AYYL, and LVIA…TPLL.

Belongs to the complex I subunit 2 family.

The protein resides in the mitochondrion inner membrane. It carries out the reaction a ubiquinone + NADH + 5 H(+)(in) = a ubiquinol + NAD(+) + 4 H(+)(out). Core subunit of the mitochondrial membrane respiratory chain NADH dehydrogenase (Complex I) that is believed to belong to the minimal assembly required for catalysis. Complex I functions in the transfer of electrons from NADH to the respiratory chain. The immediate electron acceptor for the enzyme is believed to be ubiquinone. This is NADH-ubiquinone oxidoreductase chain 2 from Rhizopus oryzae (Mucormycosis agent).